Consider the following 227-residue polypeptide: Response regulator protein TodT (227 aa).

One can recognise a Response regulatory domain in the interval 28 to 142 (VIYILDDDNA…ELLGAIRAAL (115 aa)). Asp-77 is modified (4-aspartylphosphate). Positions 158-223 (LKENYESLSK…DLVRVTERLK (66 aa)) constitute an HTH luxR-type domain. The H-T-H motif DNA-binding region spans 182 to 201 (NKQTALELDISEATVKVHRH).

In terms of processing, phosphorylated by TodS.

It localises to the cytoplasm. Functionally, member of the two-component regulatory system TodS/TodT involved in the regulation of toluene degradation. Phosphorylated TodT activates transcription of the tod operon (todXFC1C2BADEGIH). Binds specifically to a 6-bp palindromic DNA structure in the tod promoter region. The sequence is that of Response regulator protein TodT (todT) from Pseudomonas putida (strain ATCC 700007 / DSM 6899 / JCM 31910 / BCRC 17059 / LMG 24140 / F1).